A 96-amino-acid polypeptide reads, in one-letter code: Small ribosomal subunit protein bS18 (96 aa).

Residues 1–20 (MSHGGKRRSGDGGSEGSSYS) are disordered.

The protein belongs to the bacterial ribosomal protein bS18 family. As to quaternary structure, part of the 30S ribosomal subunit. Forms a tight heterodimer with protein bS6.

In terms of biological role, binds as a heterodimer with protein bS6 to the central domain of the 16S rRNA, where it helps stabilize the platform of the 30S subunit. The protein is Small ribosomal subunit protein bS18 of Anaplasma phagocytophilum (strain HZ).